Consider the following 92-residue polypeptide: MADQLTLEIISAINKLVKAENGERTSVALGEITTDTELTSLGIDSLGLADVLWDLEQLYGIKIEMNTADAWSNLNNIGDVVEAVRGLLTKEV.

A Carrier domain is found at 4–88 (QLTLEIISAI…DVVEAVRGLL (85 aa)). S45 carries the O-(pantetheine 4'-phosphoryl)serine modification.

Post-translationally, 4'-phosphopantetheine is transferred from CoA to a specific serine of apo-NodF.

In terms of biological role, proposed to synthesize nod factor fatty acyl chain. Involved in trans-2,trans-4,trans-6,cis-11-octadecatetraenoic acid biosynthesis. In Rhizobium leguminosarum bv. viciae, this protein is Nodulation protein F (nodF).